A 1257-amino-acid chain; its full sequence is MELAAWCRWGFLLALLPPGIAGTQVCTGTDMKLRLPASPETHLDMLRHLYQGCQVVQGNLELTYVPANASLSFLQDIQEVQGYMLIAHNQVKRVPLQRLRIVRGTQLFEDKYALAVLDNRDPQDNVAASTPGRTPEGLRELQLRSLTEILKGGVLIRGNPQLCYQDMVLWKDVFRKNNQLAPVDIDTNRSRACPPCAPACKDNHCWGESPEDCQILTGTICTSGCARCKGRLPTDCCHEQCAAGCTGPKHSDCLACLHFNHSGICELHCPALVTYNTDTFESMHNPEGRYTFGASCVTTCPYNYLSTEVGSCTLVCPPNNQEVTAEDGTQRCEKCSKPCARVCYGLGMEHLRGARAITSDNVQEFDGCKKIFGSLAFLPESFDGDPSSGIAPLRPEQLQVFETLEEITGYLYISAWPDSLRDLSVFQNLRIIRGRILHDGAYSLTLQGLGIHSLGLRSLRELGSGLALIHRNAHLCFVHTVPWDQLFRNPHQALLHSGNRPEEDLCVSSGLVCNSLCAHGHCWGPGPTQCVNCSHFLRGQECVEECRVWKGLPREYVSDKRCLPCHPECQPQNSSETCFGSEADQCAACAHYKDSSSCVARCPSGVKPDLSYMPIWKYPDEEGICQPCPINCTHSCVDLDERGCPAEQRASPVTFIIATVVGVLLFLILVVVVGILIKRRRQKIRKYTMRRLLQETELVEPLTPSGAMPNQAQMRILKETELRKVKVLGSGAFGTVYKGIWIPDGENVKIPVAIKVLRENTSPKANKEILDEAYVMAGVGSPYVSRLLGICLTSTVQLVTQLMPYGCLLDHVREHRGRLGSQDLLNWCVQIAKGMSYLEDVRLVHRDLAARNVLVKSPNHVKITDFGLARLLDIDETEYHADGGKVPIKWMALESILRRRFTHQSDVWSYGVTVWELMTFGAKPYDGIPAREIPDLLEKGERLPQPPICTIDVYMIMVKCWMIDSECRPRFRELVSEFSRMARDPQRFVVIQNEDLGPSSPMDSTFYRSLLEDDDMGDLVDAEEYLVPQQGFFSPDPTPGTGSTAHRRHRSSSTRSGGGELTLGLEPSEEGPPRSPLAPSEGAGSDVFDGDLAMGVTKGLQSLSPHDLSPLQRYSEDPTLPLPPETDGYVAPLACSPQPEYVNQSEVQPQPPLTPEGPLPPVRPAGATLERPKTLSPGKNGVVKDVFAFGGAVENPEYLVPREGTASPPHPSPAFSPAFDNLYYWDQNSSEQGPPPSNFEGTPTAENPEYLGLDVPV.

Positions 1-22 are cleaved as a signal peptide; it reads MELAAWCRWGFLLALLPPGIAG. Topologically, residues 23-654 are extracellular; sequence TQVCTGTDMK…PAEQRASPVT (632 aa). Cys26 and Cys53 are oxidised to a cystine. N-linked (GlcNAc...) asparagine glycosylation is found at Asn68 and Asn188. Disulfide bonds link Cys163-Cys193, Cys196-Cys205, Cys200-Cys213, Cys221-Cys228, Cys225-Cys236, Cys237-Cys245, Cys241-Cys253, Cys256-Cys265, Cys269-Cys296, Cys300-Cys312, Cys316-Cys332, Cys335-Cys339, Cys343-Cys368, Cys476-Cys506, Cys513-Cys522, and Cys517-Cys530. Asn260 is a glycosylation site (N-linked (GlcNAc...) asparagine). N-linked (GlcNAc...) asparagine glycosylation is present at Asn532. Cystine bridges form between Cys533/Cys542, Cys546/Cys562, Cys565/Cys578, Cys569/Cys586, Cys589/Cys598, Cys602/Cys625, Cys628/Cys636, and Cys632/Cys644. Residue Asn573 is glycosylated (N-linked (GlcNAc...) asparagine). Asn631 is a glycosylation site (N-linked (GlcNAc...) asparagine). A helical transmembrane segment spans residues 655 to 677; it reads FIIATVVGVLLFLILVVVVGILI. Residues 678 to 691 form a required for interaction with KPNB1 and EEA1 region; it reads KRRRQKIRKYTMRR. The Nuclear localization signal motif lies at 678–691; the sequence is KRRRQKIRKYTMRR. Residues 678–1257 lie on the Cytoplasmic side of the membrane; the sequence is KRRRQKIRKY…PEYLGLDVPV (580 aa). Residues 722 to 989 enclose the Protein kinase domain; the sequence is LRKVKVLGSG…RMARDPQRFV (268 aa). ATP contacts are provided by residues 728 to 736 and Lys755; that span reads LGSGAFGTV. The Proton acceptor role is filled by Asp847. Phosphotyrosine is present on Tyr879. The interval 1029–1181 is disordered; sequence QQGFFSPDPT…PKTLSPGKNG (153 aa). Phosphoserine occurs at positions 1056, 1080, 1085, and 1109. A Phosphotyrosine modification is found at Tyr1114. Phosphotyrosine; by autocatalysis is present on Tyr1141. The segment covering 1149–1163 has biased composition (pro residues); sequence PQPPLTPEGPLPPVR. A Phosphothreonine modification is found at Thr1168. Residues 1197 to 1199 are interaction with PIK3C2B; that stretch reads EYL. Tyr1198 bears the Phosphotyrosine mark. Residues 1200–1257 form a disordered region; the sequence is VPREGTASPPHPSPAFSPAFDNLYYWDQNSSEQGPPPSNFEGTPTAENPEYLGLDVPV. Tyr1250 bears the Phosphotyrosine; by autocatalysis mark.

This sequence belongs to the protein kinase superfamily. Tyr protein kinase family. EGF receptor subfamily. Homodimer. Heterodimer with EGFR, ERBB3 and ERBB4. Part of a complex with EGFR and either PIK3C2A or PIK3C2B. May interact with PIK3C2B when phosphorylated on Tyr-1198. Interacts with PRKCABP and PLXNB1. Interacts (when phosphorylated on Tyr-1250) with MEMO1. Interacts with MUC1. Interacts (when phosphorylated on Tyr-1141) with GRB7 (via SH2 domain). Interacts (when phosphorylated on Tyr-1250) with ERBIN Interacts with SRC, KPNB1, RANBP2, EEA1, CRM1, CLTC, PTK6, RPA194, MYOC and ACTB. Interacts with HSP90AA1 and HSP90AB1; the interaction suppresses ERBB2 kinase activity. Interacts with SORL1; this interaction regulates ERBB2 subcellular distribution by promoting its recycling after internalization from endosomes back to the plasma membrane, hence stimulates ERBB2-mediated signaling. Interacts with SH3BGRL. Interacts with ROR1. In terms of processing, autophosphorylated. Autophosphorylation occurs in trans, i.e. one subunit of the dimeric receptor phosphorylates tyrosine residues on the other subunit. Ligand-binding increases phosphorylation on tyrosine residues. Signaling via SEMA4C promotes phosphorylation at Tyr-1250. Dephosphorylated by PTPN12.

It is found in the cell membrane. The protein resides in the cell projection. The protein localises to the ruffle membrane. It localises to the early endosome. Its subcellular location is the cytoplasm. It is found in the perinuclear region. The protein resides in the nucleus. It catalyses the reaction L-tyrosyl-[protein] + ATP = O-phospho-L-tyrosyl-[protein] + ADP + H(+). Functionally, protein tyrosine kinase that is part of several cell surface receptor complexes, but that apparently needs a coreceptor for ligand binding. Essential component of a neuregulin-receptor complex, although neuregulins do not interact with it alone. GP30 is a potential ligand for this receptor. Regulates outgrowth and stabilization of peripheral microtubules (MTs). Upon ERBB2 activation, the MEMO1-RHOA-DIAPH1 signaling pathway elicits the phosphorylation and thus the inhibition of GSK3B at cell membrane. This prevents the phosphorylation of APC and CLASP2, allowing its association with the cell membrane. In turn, membrane-bound APC allows the localization of MACF1 to the cell membrane, which is required for microtubule capture and stabilization. Interacts (preferentially with the tyrosine phosphorylated form) with CPNE3; this interaction occurs at the cell membrane and is increased in a growth factor heregulin-dependent manner. Its function is as follows. In the nucleus is involved in transcriptional regulation. Associates with the 5'-TCAAATTC-3' sequence in the PTGS2/COX-2 promoter and activates its transcription. Implicated in transcriptional activation of CDKN1A; the function involves STAT3 and SRC. Involved in the transcription of rRNA genes by RNA Pol I and enhances protein synthesis and cell growth. The chain is Receptor tyrosine-protein kinase erbB-2 (Erbb2) from Rattus norvegicus (Rat).